Reading from the N-terminus, the 171-residue chain is S-ribosylhomocysteine lyase (171 aa).

Positions 54, 58, and 128 each coordinate Fe cation.

It belongs to the LuxS family. In terms of assembly, homodimer. Fe cation is required as a cofactor.

It catalyses the reaction S-(5-deoxy-D-ribos-5-yl)-L-homocysteine = (S)-4,5-dihydroxypentane-2,3-dione + L-homocysteine. Its function is as follows. Involved in the synthesis of autoinducer 2 (AI-2) which is secreted by bacteria and is used to communicate both the cell density and the metabolic potential of the environment. The regulation of gene expression in response to changes in cell density is called quorum sensing. Catalyzes the transformation of S-ribosylhomocysteine (RHC) to homocysteine (HC) and 4,5-dihydroxy-2,3-pentadione (DPD). In Proteus mirabilis (strain HI4320), this protein is S-ribosylhomocysteine lyase.